Here is a 412-residue protein sequence, read N- to C-terminus: Phosphoglycerate kinase, plasmid (412 aa).

Residues 39–41 (DLN), arginine 55, 78–81 (HLGR), arginine 133, and arginine 166 each bind substrate. Residues lysine 217, glutamate 339, and 365 to 368 (GGDT) each bind ATP.

It belongs to the phosphoglycerate kinase family. As to quaternary structure, monomer.

Its subcellular location is the cytoplasm. It carries out the reaction (2R)-3-phosphoglycerate + ATP = (2R)-3-phospho-glyceroyl phosphate + ADP. The protein operates within carbohydrate biosynthesis; Calvin cycle. This is Phosphoglycerate kinase, plasmid (cbbKP) from Cupriavidus necator (strain ATCC 17699 / DSM 428 / KCTC 22496 / NCIMB 10442 / H16 / Stanier 337) (Ralstonia eutropha).